Here is a 470-residue protein sequence, read N- to C-terminus: Negative regulator of sexual conjugation and meiosis (470 aa).

The region spanning 18 to 295 (LRFVSIIGAG…ITLPELSTLV (278 aa)) is the Protein kinase domain. ATP contacts are provided by residues 24–32 (IGAGAYGVV) and lysine 47. The Proton acceptor role is filled by aspartate 143. Position 469 is a phosphoserine (serine 469).

Belongs to the protein kinase superfamily. Ser/Thr protein kinase family.

It carries out the reaction L-seryl-[protein] + ATP = O-phospho-L-seryl-[protein] + ADP + H(+). It catalyses the reaction L-threonyl-[protein] + ATP = O-phospho-L-threonyl-[protein] + ADP + H(+). In terms of biological role, this protein is a negative regulator of both sexual conjugation and meiosis. It phosphorylates mei2. It blocks the onset of meiosis until conjugation takes place. The sequence is that of Negative regulator of sexual conjugation and meiosis (ran1) from Schizosaccharomyces pombe (strain 972 / ATCC 24843) (Fission yeast).